We begin with the raw amino-acid sequence, 299 residues long: MDIQEEYMPFRAYQTYYRVVGDLRSPLTPLLLLHGGPGSTHNYFEAFDQLAMATGRPIVMYDQLGCGRSSIPTDPHLWQAATWVAELRALRAYLKLDCVHLLGQSWGGMLALIYLCDDQPRGIQSVILASTLSSAHLWAREQHRLIQFMSTTDQAAIHQAEMTGDFTTPAYLAANERFMIQHATGPITEQTPEFLRRSKRLGTAAYTTAWGPNEYFPTGTLRDYDYTAKLAQLPYPTLVTSGVNDLCTPLVAKTMVDQLPHAEWTLFPHSRHMAFIDEPAAYQARLTQWLAAHDEVTDD.

The AB hydrolase-1 domain occupies P29–P279. S105 (nucleophile) is an active-site residue. The active site involves D245. H272 serves as the catalytic Proton donor.

The protein belongs to the peptidase S33 family.

The protein localises to the cell envelope. It catalyses the reaction Release of N-terminal proline from a peptide.. In terms of biological role, releases the N-terminal proline from various substrates. The polypeptide is Proline iminopeptidase (Levilactobacillus brevis (strain ATCC 367 / BCRC 12310 / CIP 105137 / JCM 1170 / LMG 11437 / NCIMB 947 / NCTC 947) (Lactobacillus brevis)).